The sequence spans 740 residues: Protein SIEVE ELEMENT OCCLUSION B (740 aa).

Residues 1–23 are compositionally biased toward polar residues; that stretch reads MESLIKSQHAQQLAGHKNTTGKT. Positions 1–27 are disordered; the sequence is MESLIKSQHAQQLAGHKNTTGKTPSME.

In terms of assembly, can form homodimer. In terms of tissue distribution, expressed in phloem sieve elements.

Scaffold protein required to form the phloem filament matrix in sieve elements. This Arabidopsis thaliana (Mouse-ear cress) protein is Protein SIEVE ELEMENT OCCLUSION B.